The following is a 203-amino-acid chain: MFITFEGPDGSGKSTIIQKVYDYLIENNYDVIKTREPGGSPIAEKIRNLILDTENIKMGYRTEALLYAASRAQHVEETILPALNENKIVLCDRFLISSLAYQGVGRGLGIENVRNINEFAINGVFPDFVLFFDVDPITTLKRKSSLDTADRLEKEGNNFHERVYNGYKEILNSEKNIEIIDATQSVEDVFSQCIEVLKRRNVL.

An ATP-binding site is contributed by 7–14 (GPDGSGKS).

Belongs to the thymidylate kinase family.

The catalysed reaction is dTMP + ATP = dTDP + ADP. In terms of biological role, phosphorylation of dTMP to form dTDP in both de novo and salvage pathways of dTTP synthesis. This Finegoldia magna (strain ATCC 29328 / DSM 20472 / WAL 2508) (Peptostreptococcus magnus) protein is Thymidylate kinase.